A 94-amino-acid polypeptide reads, in one-letter code: ATP synthase F(0) complex subunit f, mitochondrial (94 aa).

N-acetylalanine is present on A2. Phosphoserine is present on S3. At K22 the chain carries N6-acetyllysine. Residues 68-85 form a helical membrane-spanning segment; that stretch reads MVLACYVLFSYSFSYKHL.

It belongs to the ATPase F chain family. Component of the ATP synthase complex composed at least of ATP5F1A/subunit alpha, ATP5F1B/subunit beta, ATP5MC1/subunit c (homooctomer), MT-ATP6/subunit a, MT-ATP8/subunit 8, ATP5ME/subunit e, ATP5MF/subunit f, ATP5MG/subunit g, ATP5MK/subunit k, ATP5MJ/subunit j, ATP5F1C/subunit gamma, ATP5F1D/subunit delta, ATP5F1E/subunit epsilon, ATP5PF/subunit F6, ATP5PB/subunit b, ATP5PD/subunit d, ATP5PO/subunit OSCP. ATP synthase complex consists of a soluble F(1) head domain (subunits alpha(3) and beta(3)) - the catalytic core - and a membrane F(0) domain - the membrane proton channel (subunits c, a, 8, e, f, g, k and j). These two domains are linked by a central stalk (subunits gamma, delta, and epsilon) rotating inside the F1 region and a stationary peripheral stalk (subunits F6, b, d, and OSCP).

It localises to the mitochondrion. The protein resides in the mitochondrion inner membrane. Its function is as follows. Subunit f, of the mitochondrial membrane ATP synthase complex (F(1)F(0) ATP synthase or Complex V) that produces ATP from ADP in the presence of a proton gradient across the membrane which is generated by electron transport complexes of the respiratory chain. ATP synthase complex consist of a soluble F(1) head domain - the catalytic core - and a membrane F(1) domain - the membrane proton channel. These two domains are linked by a central stalk rotating inside the F(1) region and a stationary peripheral stalk. During catalysis, ATP synthesis in the catalytic domain of F(1) is coupled via a rotary mechanism of the central stalk subunits to proton translocation. In vivo, can only synthesize ATP although its ATP hydrolase activity can be activated artificially in vitro. Part of the complex F(0) domain. The polypeptide is ATP synthase F(0) complex subunit f, mitochondrial (Pongo abelii (Sumatran orangutan)).